The following is a 123-amino-acid chain: Guanine nucleotide exchange factor MSS4 (123 aa).

Methionine 1 bears the N-acetylmethionine mark. Residues 9-123 (ELVSAEGRNR…YVALERVSHE (115 aa)) enclose the MSS4 domain. Zn(2+) contacts are provided by cysteine 23, cysteine 26, cysteine 94, and cysteine 97.

The protein belongs to the DSS4/MSS4 family. Interacts with RAB8A. Ubiquitous.

Its function is as follows. Guanine-nucleotide-releasing protein that acts on members of the SEC4/YPT1/RAB subfamily. Stimulates GDP release from both YPT1, RAB3A and RAB10, but is less active on these proteins than on the SEC4 protein. Might play a general role in vesicular transport. In Homo sapiens (Human), this protein is Guanine nucleotide exchange factor MSS4 (RABIF).